The following is a 135-amino-acid chain: Small ribosomal subunit protein uS12 (135 aa).

Residue aspartate 89 is modified to 3-methylthioaspartic acid. Positions 108 to 135 are disordered; the sequence is NKRTVSRSKYGTKKAKATDKKATDNKKK. Positions 111–122 are enriched in basic residues; sequence TVSRSKYGTKKA. Basic and acidic residues predominate over residues 123 to 135; it reads KATDKKATDNKKK.

Belongs to the universal ribosomal protein uS12 family. As to quaternary structure, part of the 30S ribosomal subunit. Contacts proteins S8 and S17. May interact with IF1 in the 30S initiation complex.

Its function is as follows. With S4 and S5 plays an important role in translational accuracy. In terms of biological role, interacts with and stabilizes bases of the 16S rRNA that are involved in tRNA selection in the A site and with the mRNA backbone. Located at the interface of the 30S and 50S subunits, it traverses the body of the 30S subunit contacting proteins on the other side and probably holding the rRNA structure together. The combined cluster of proteins S8, S12 and S17 appears to hold together the shoulder and platform of the 30S subunit. The polypeptide is Small ribosomal subunit protein uS12 (Helicobacter pylori (strain P12)).